We begin with the raw amino-acid sequence, 857 residues long: Bifunctional uridylyltransferase/uridylyl-removing enzyme (857 aa).

A uridylyltransferase region spans residues 1-322; it reads MDTTPELLLC…FPSESMVTRE (322 aa). The uridylyl-removing stretch occupies residues 323-679; sequence INDRFVERQG…ARISPAGEGL (357 aa). In terms of domain architecture, HD spans 441 to 563; the sequence is VDQHILMVVR…VGNGRYLTAL (123 aa). ACT domains follow at residues 680–760 and 788–857; these read QVAV…DPTQ and LLSV…ALAI.

Belongs to the GlnD family. The cofactor is Mg(2+).

It catalyses the reaction [protein-PII]-L-tyrosine + UTP = [protein-PII]-uridylyl-L-tyrosine + diphosphate. The catalysed reaction is [protein-PII]-uridylyl-L-tyrosine + H2O = [protein-PII]-L-tyrosine + UMP + H(+). Uridylyltransferase (UTase) activity is inhibited by glutamine, while glutamine activates uridylyl-removing (UR) activity. In terms of biological role, modifies, by uridylylation and deuridylylation, the PII regulatory proteins (GlnB and homologs), in response to the nitrogen status of the cell that GlnD senses through the glutamine level. Under low glutamine levels, catalyzes the conversion of the PII proteins and UTP to PII-UMP and PPi, while under higher glutamine levels, GlnD hydrolyzes PII-UMP to PII and UMP (deuridylylation). Thus, controls uridylylation state and activity of the PII proteins, and plays an important role in the regulation of nitrogen assimilation and metabolism. This Cupriavidus metallidurans (strain ATCC 43123 / DSM 2839 / NBRC 102507 / CH34) (Ralstonia metallidurans) protein is Bifunctional uridylyltransferase/uridylyl-removing enzyme.